Consider the following 949-residue polypeptide: RNA polymerase-associated protein RapA (949 aa).

One can recognise a Helicase ATP-binding domain in the interval Glu-164–Asn-332. ATP is bound at residue Asp-177–Thr-184. Residues Asp-278 to His-281 carry the DEAH box motif. Residues Arg-474–His-628 form the Helicase C-terminal domain.

This sequence belongs to the SNF2/RAD54 helicase family. RapA subfamily. In terms of assembly, interacts with the RNAP. Has a higher affinity for the core RNAP than for the holoenzyme. Its ATPase activity is stimulated by binding to RNAP.

Transcription regulator that activates transcription by stimulating RNA polymerase (RNAP) recycling in case of stress conditions such as supercoiled DNA or high salt concentrations. Probably acts by releasing the RNAP, when it is trapped or immobilized on tightly supercoiled DNA. Does not activate transcription on linear DNA. Probably not involved in DNA repair. This Pseudomonas fluorescens (strain ATCC BAA-477 / NRRL B-23932 / Pf-5) protein is RNA polymerase-associated protein RapA.